The sequence spans 613 residues: Zinc finger CCCH domain-containing protein 59 (613 aa).

The segment at 275-296 (NTTLSPYISPAKSVPVEETPKR) is disordered. 2 C3H1-type zinc fingers span residues 318 to 346 (AGGN…HDEE) and 350 to 378 (HYNR…HSLS).

The polypeptide is Zinc finger CCCH domain-containing protein 59 (Oryza sativa subsp. japonica (Rice)).